The chain runs to 454 residues: OTU domain-containing protein 1 (454 aa).

Disordered stretches follow at residues 36–64 and 116–257; these read QSAS…REAA and LPPP…SRAD. The span at 52-64 shows a compositional bias: low complexity; it reads RPPAAATEPREAA. Positions 116 to 125 are enriched in pro residues; it reads LPPPSAPSPP. Basic and acidic residues-rich tracts occupy residues 151-164, 193-210, and 219-229; these read DAPD…EHRQ, GEER…RASG, and ALRRQDPEAEA. Residues 282-411 enclose the OTU domain; that stretch reads KYRFHIIPDG…NGHYDAVFDH (130 aa). Residues 287-293 form a cys-loop region; sequence IIPDGNC. D290 is a catalytic residue. The active-site Nucleophile is C293. The interval 342 to 352 is his-loop; that stretch reads AAQDGAWAGYP. Residues 399 to 404 are variable-loop; that stretch reads WLSNGH. H404 is an active-site residue. The UIM domain maps to 430–449; the sequence is KRDEELAKSMAISLSKMYIE.

It catalyses the reaction Thiol-dependent hydrolysis of ester, thioester, amide, peptide and isopeptide bonds formed by the C-terminal Gly of ubiquitin (a 76-residue protein attached to proteins as an intracellular targeting signal).. Deubiquitinating enzyme that specifically hydrolyzes 'Lys-63'-linked polyubiquitin to monoubiquitin. Required for the stability and translation of a subset mRNAs with a high abundance of rare codons by mediating deubiquitination of 40S ribosomal protein RPS10/eS10, thereby antagonizing ZNF598-mediated 40S ubiquitination. The abundance of rare codons in mRNAs can limit the translation rate and can lead to ribosome collisions that trigger activation of ribosome quality control (RQC) pathway by ZNF598. OTUD1-mediated deubiquitination prevents activation of the RQC and subsequent dissociation of ribosomes and stimulates formation of polysomes and translation. The sequence is that of OTU domain-containing protein 1 (Otud1) from Mus musculus (Mouse).